Consider the following 497-residue polypeptide: Lysine--tRNA ligase (497 aa).

Mg(2+) contacts are provided by Glu405 and Glu412.

This sequence belongs to the class-II aminoacyl-tRNA synthetase family. Homodimer. Mg(2+) is required as a cofactor.

It is found in the cytoplasm. The catalysed reaction is tRNA(Lys) + L-lysine + ATP = L-lysyl-tRNA(Lys) + AMP + diphosphate. This is Lysine--tRNA ligase from Gloeobacter violaceus (strain ATCC 29082 / PCC 7421).